The primary structure comprises 412 residues: MVEKIIVSNPVANLLGDEQTRVIWDLIEKKLIFPFLDLKVETYDLGIEYRDKTNDQVTIDAANAIKRLKVGIKCATITPDEARVTEFGLKEMWKSPNGTIRNTLGGTLFREPIVCKNVPRLVTCWNKSIVIGRHAFGDQYRATDFVVKGAGKLELTYTPADGSAPQKFQVFDFPSDGGVALGMYNTDASIKEFAYACFNFSLDKKWPLYLSTKNTILKRYDGRFKDIFQEIYEREYKVKFDTAGIWYEHRLIDDMVAYAMKSEGGFVWACKNYDGDVQSDAVAQGYGSLGLMTSVLLSADSLVAEASHGTVTRHFREHQKGRETSTNSIASIFAWTRGLEYRAKLDNNDKLLKFCHALEASCIDAVESGFMTKDLAICVKGSVENVKRTDYLNTEEYINKVAELLVSKLTAL.

NADP(+) contacts are provided by residues 76-78 (TIT) and arginine 83. Residue threonine 78 participates in substrate binding. Residues 95-101 (SPNGTIR), arginine 110, and arginine 133 each bind substrate. Aspartate 253 provides a ligand contact to Mn(2+). Lysine 261 serves as a coordination point for NADP(+). Aspartate 276 serves as a coordination point for Mn(2+). NADP(+) contacts are provided by residues 309–314 (GTVTRH) and asparagine 327.

The protein belongs to the isocitrate and isopropylmalate dehydrogenases family. As to quaternary structure, homodimer. The cofactor is Mg(2+). Mn(2+) serves as cofactor.

The protein resides in the cytoplasm. It catalyses the reaction D-threo-isocitrate + NADP(+) = 2-oxoglutarate + CO2 + NADPH. The polypeptide is Isocitrate dehydrogenase [NADP] cytoplasmic (idhC) (Dictyostelium discoideum (Social amoeba)).